Consider the following 402-residue polypeptide: Galactoside 2-alpha-L-fucosyltransferase (402 aa).

The Cytoplasmic portion of the chain corresponds to 1-6 (MRYNSN). A helical; Signal-anchor for type II membrane protein membrane pass occupies residues 7-27 (YLMYFCLVLGIFANIYVIIKI). Residues 28-402 (TLGSSHILEY…TDLNGKISKY (375 aa)) are Lumenal-facing. N-linked (GlcNAc...) asparagine glycosylation is found at Asn119, Asn175, and Asn301.

This sequence belongs to the glycosyltransferase 11 family. In terms of assembly, may form oligomers. Post-translationally, N-glycosylated. In terms of tissue distribution, expression is restricted to pharyngeal neurons and gland cells.

It is found in the golgi apparatus. The protein localises to the golgi stack membrane. It functions in the pathway protein modification; protein glycosylation. Functionally, selectively catalyzes the addition of fucose in alpha 1-2 linkage to Gal-beta-(1-&gt;3)-GalNAc-alpha-R, Gal-beta-(1-&gt;3)-(GlcNAc-beta-(1-&gt;6))-GalNAc-alpha-R and Gal-beta-(1-&gt;3)-GalNAc acceptors but not Gal-beta-(1-&gt;3)-GlcNAc-beta-(1-&gt;3)-Gal-beta-(1-&gt;4)-Glc in vitro. The chain is Galactoside 2-alpha-L-fucosyltransferase from Caenorhabditis elegans.